We begin with the raw amino-acid sequence, 135 residues long: Ribonuclease P protein component 2 (135 aa).

It belongs to the eukaryotic/archaeal RNase P protein component 2 family. As to quaternary structure, consists of a catalytic RNA component and at least 4-5 protein subunits.

The protein localises to the cytoplasm. The catalysed reaction is Endonucleolytic cleavage of RNA, removing 5'-extranucleotides from tRNA precursor.. Functionally, part of ribonuclease P, a protein complex that generates mature tRNA molecules by cleaving their 5'-ends. This Methanococcus aeolicus (strain ATCC BAA-1280 / DSM 17508 / OCM 812 / Nankai-3) protein is Ribonuclease P protein component 2.